The sequence spans 309 residues: tRNA dimethylallyltransferase (309 aa).

Position 8 to 15 (8 to 15) interacts with ATP; sequence GPTATGKS. 10 to 15 is a binding site for substrate; the sequence is TATGKS. Positions 33 to 36 are interaction with substrate tRNA; that stretch reads DSRQ.

This sequence belongs to the IPP transferase family. As to quaternary structure, monomer. The cofactor is Mg(2+).

It catalyses the reaction adenosine(37) in tRNA + dimethylallyl diphosphate = N(6)-dimethylallyladenosine(37) in tRNA + diphosphate. Its function is as follows. Catalyzes the transfer of a dimethylallyl group onto the adenine at position 37 in tRNAs that read codons beginning with uridine, leading to the formation of N6-(dimethylallyl)adenosine (i(6)A). This is tRNA dimethylallyltransferase from Trichodesmium erythraeum (strain IMS101).